We begin with the raw amino-acid sequence, 258 residues long: E3 ubiquitin-protein ligase RNF170 (258 aa).

Residues 1–24 (MAKYQGEVQSLKLDDDSVIEGVSD) are Lumenal-facing. Residues 25 to 45 (QVLVAVVVSFALIATLVYALF) form a helical membrane-spanning segment. Residues 46–201 (RNVHQNIHPE…GGLFWMFRIR (156 aa)) are Cytoplasmic-facing. The RING-type zinc finger occupies 87–130 (CPICLHQASFPVETNCGHLFCGACIIAYWRYGSWLGAISCPICR). The helical transmembrane segment at 202-222 (IILCLMGAFFYLISPLDFVPE) threads the bilayer. Ala-223 is a topological domain (lumenal). Residues 224 to 244 (LFGILGFLDDFFVIFLLLIYI) traverse the membrane as a helical segment. The Cytoplasmic portion of the chain corresponds to 245–258 (SIMYREVITQRLTR).

As to quaternary structure, (Microbial infection) Interacts with human cytomegalovirus protein NEC2/UL50; this interaction promotes of UBA7 ubiquitination and subsequent proteasomal degradation. Constitutively associated with the ERLIN1/ERLIN 2 complex. Interacts with activated ITPR1. As to expression, expressed in the spinal cord.

It localises to the endoplasmic reticulum membrane. The enzyme catalyses S-ubiquitinyl-[E2 ubiquitin-conjugating enzyme]-L-cysteine + [acceptor protein]-L-lysine = [E2 ubiquitin-conjugating enzyme]-L-cysteine + N(6)-ubiquitinyl-[acceptor protein]-L-lysine.. It participates in protein modification; protein ubiquitination. In terms of biological role, E3 ubiquitin-protein ligase that plays an essential role in stimulus-induced inositol 1,4,5-trisphosphate receptor type 1 (ITPR1) ubiquitination and degradation via the endoplasmic reticulum-associated degradation (ERAD) pathway. Also involved in ITPR1 turnover in resting cells. Selectively inhibits the TLR3-triggered innate immune response by promoting the 'Lys-48'-linked polyubiquitination and degradation of TLR3. The protein is E3 ubiquitin-protein ligase RNF170 (RNF170) of Homo sapiens (Human).